The chain runs to 500 residues: Palmitoleoyl-protein carboxylesterase notum1a (500 aa).

Residues M1–G26 form the signal peptide. A glycan (N-linked (GlcNAc...) asparagine) is linked at N101. Active-site charge relay system residues include S237, D344, and H393.

The protein belongs to the pectinacetylesterase family. Notum subfamily.

It localises to the secreted. It catalyses the reaction [Wnt protein]-O-(9Z)-hexadecenoyl-L-serine + H2O = [Wnt protein]-L-serine + (9Z)-hexadecenoate + H(+). Functionally, carboxylesterase that acts as a key negative regulator of the Wnt signaling pathway. Acts by specifically mediating depalmitoleoylation of WNT proteins. Serine palmitoleoylation of WNT proteins is required for efficient binding to frizzled receptors. The polypeptide is Palmitoleoyl-protein carboxylesterase notum1a (Danio rerio (Zebrafish)).